The sequence spans 305 residues: Ribonucleoside-diphosphate reductase small subunit (305 aa).

Residues Glu64, Glu94, and His97 each coordinate Fe cation. Tyr101 is an active-site residue. Residues 150–170 (VLVFLLIEGIFFISSFYSIAT) traverse the membrane as a helical segment. Residues Glu157, Glu191, and His194 each coordinate Fe cation.

The protein belongs to the ribonucleoside diphosphate reductase small chain family. As to quaternary structure, heterotetramer composed of a homodimer of the large subunit (R1) and a homodimer of the small subunit (R2). Larger multisubunit protein complex are also active, composed of (R1)n(R2)n. The cofactor is Fe cation.

The protein resides in the host membrane. It catalyses the reaction a 2'-deoxyribonucleoside 5'-diphosphate + [thioredoxin]-disulfide + H2O = a ribonucleoside 5'-diphosphate + [thioredoxin]-dithiol. Ribonucleoside-diphosphate reductase holoenzyme provides the precursors necessary for viral DNA synthesis. Allows virus growth in non-dividing cells, as well as reactivation from latency in infected hosts. Catalyzes the biosynthesis of deoxyribonucleotides from the corresponding ribonucleotides. The polypeptide is Ribonucleoside-diphosphate reductase small subunit (Equus caballus (Horse)).